The sequence spans 98 residues: Small ribosomal subunit protein bS6 (98 aa).

It belongs to the bacterial ribosomal protein bS6 family.

Its function is as follows. Binds together with bS18 to 16S ribosomal RNA. This chain is Small ribosomal subunit protein bS6, found in Moorella thermoacetica (strain ATCC 39073 / JCM 9320).